The chain runs to 45 residues: MEGILFLAKLPEAYAIFKPIIDVAPVIPVFFLLLAFVWQAAVGFR.

A propeptide spanning residues 1–8 is cleaved from the precursor; it reads MEGILFLA. The helical transmembrane segment at 24–44 threads the bilayer; that stretch reads APVIPVFFLLLAFVWQAAVGF.

It belongs to the PsbK family. As to quaternary structure, PSII is composed of 1 copy each of membrane proteins PsbA, PsbB, PsbC, PsbD, PsbE, PsbF, PsbH, PsbI, PsbJ, PsbK, PsbL, PsbM, PsbT, PsbX, PsbY, PsbZ, Psb30/Ycf12, at least 3 peripheral proteins of the oxygen-evolving complex and a large number of cofactors. It forms dimeric complexes.

It localises to the plastid. The protein localises to the chloroplast thylakoid membrane. Functionally, one of the components of the core complex of photosystem II (PSII). PSII is a light-driven water:plastoquinone oxidoreductase that uses light energy to abstract electrons from H(2)O, generating O(2) and a proton gradient subsequently used for ATP formation. It consists of a core antenna complex that captures photons, and an electron transfer chain that converts photonic excitation into a charge separation. In Guillardia theta (Cryptophyte), this protein is Photosystem II reaction center protein K.